Here is a 488-residue protein sequence, read N- to C-terminus: Probable glycine dehydrogenase (decarboxylating) subunit 2 (488 aa).

N6-(pyridoxal phosphate)lysine is present on Lys-264.

This sequence belongs to the GcvP family. C-terminal subunit subfamily. The glycine cleavage system is composed of four proteins: P, T, L and H. In this organism, the P 'protein' is a heterodimer of two subunits. The cofactor is pyridoxal 5'-phosphate.

The catalysed reaction is N(6)-[(R)-lipoyl]-L-lysyl-[glycine-cleavage complex H protein] + glycine + H(+) = N(6)-[(R)-S(8)-aminomethyldihydrolipoyl]-L-lysyl-[glycine-cleavage complex H protein] + CO2. Functionally, the glycine cleavage system catalyzes the degradation of glycine. The P protein binds the alpha-amino group of glycine through its pyridoxal phosphate cofactor; CO(2) is released and the remaining methylamine moiety is then transferred to the lipoamide cofactor of the H protein. In Methylococcus capsulatus (strain ATCC 33009 / NCIMB 11132 / Bath), this protein is Probable glycine dehydrogenase (decarboxylating) subunit 2.